Consider the following 655-residue polypeptide: Fructose-1,6-bisphosphatase class 3 (655 aa).

This sequence belongs to the FBPase class 3 family. Mn(2+) serves as cofactor.

It catalyses the reaction beta-D-fructose 1,6-bisphosphate + H2O = beta-D-fructose 6-phosphate + phosphate. Its pathway is carbohydrate biosynthesis; gluconeogenesis. The protein is Fructose-1,6-bisphosphatase class 3 of Porphyromonas gingivalis (strain ATCC 33277 / DSM 20709 / CIP 103683 / JCM 12257 / NCTC 11834 / 2561).